Consider the following 372-residue polypeptide: NAD(P)H-quinone oxidoreductase subunit 1 (372 aa).

9 helical membrane passes run 27–47 (AIWMPLPMILMLIGATVGVLV), 65–85 (PEYIGPLGLLAPVADGLKLVF), 97–117 (WLFTLGPILVVLPVFLSYLIV), 128–148 (VGTGIFLWIALSSIQPIGLLM), 166–186 (AAQSISYEIPLALSVLAIVMM), 204–224 (ILGWNIWRQPLGFMIFWIAAL), 266–286 (ILSALLVAVLYLGGWDFPIPI), 308–328 (ALGITMTLVKAYFLVFIAILL), and 347–367 (FLLPVGLVNLLLTAALKLAFP).

It belongs to the complex I subunit 1 family. In terms of assembly, NDH-1 is composed of at least 11 different subunits.

The protein localises to the cellular thylakoid membrane. It catalyses the reaction a plastoquinone + NADH + (n+1) H(+)(in) = a plastoquinol + NAD(+) + n H(+)(out). The catalysed reaction is a plastoquinone + NADPH + (n+1) H(+)(in) = a plastoquinol + NADP(+) + n H(+)(out). In terms of biological role, NDH-1 shuttles electrons from an unknown electron donor, via FMN and iron-sulfur (Fe-S) centers, to quinones in the respiratory and/or the photosynthetic chain. The immediate electron acceptor for the enzyme in this species is believed to be plastoquinone. Couples the redox reaction to proton translocation, and thus conserves the redox energy in a proton gradient. This is NAD(P)H-quinone oxidoreductase subunit 1 from Nostoc sp. (strain PCC 7120 / SAG 25.82 / UTEX 2576).